Consider the following 107-residue polypeptide: Phosphoribosyl-ATP pyrophosphatase (107 aa).

The protein belongs to the PRA-PH family.

It localises to the cytoplasm. It carries out the reaction 1-(5-phospho-beta-D-ribosyl)-ATP + H2O = 1-(5-phospho-beta-D-ribosyl)-5'-AMP + diphosphate + H(+). Its pathway is amino-acid biosynthesis; L-histidine biosynthesis; L-histidine from 5-phospho-alpha-D-ribose 1-diphosphate: step 2/9. In Mesorhizobium japonicum (strain LMG 29417 / CECT 9101 / MAFF 303099) (Mesorhizobium loti (strain MAFF 303099)), this protein is Phosphoribosyl-ATP pyrophosphatase (hisE).